The primary structure comprises 191 residues: Putative RNA-binding protein EEED8.4 (191 aa).

Positions 55 to 132 (KSVFIGNVDF…RPIVVTAKRT (78 aa)) constitute an RRM domain. The tract at residues 136-160 (GMGHGVRGSSRGTFGRGRGAARGAP) is disordered.

The polypeptide is Putative RNA-binding protein EEED8.4 (Caenorhabditis elegans).